We begin with the raw amino-acid sequence, 242 residues long: NH(3)-dependent NAD(+) synthetase (242 aa).

27-34 lines the ATP pocket; it reads GISGGIDS. Asp-33 provides a ligand contact to Mg(2+). Residue Arg-109 coordinates deamido-NAD(+). Residue Thr-129 coordinates ATP. Glu-134 contributes to the Mg(2+) binding site. Lys-142 and Asp-149 together coordinate deamido-NAD(+). ATP contacts are provided by Lys-158 and Thr-180. Residue 231 to 232 coordinates deamido-NAD(+); sequence HK.

Belongs to the NAD synthetase family. Homodimer.

It carries out the reaction deamido-NAD(+) + NH4(+) + ATP = AMP + diphosphate + NAD(+) + H(+). It functions in the pathway cofactor biosynthesis; NAD(+) biosynthesis; NAD(+) from deamido-NAD(+) (ammonia route): step 1/1. In terms of biological role, catalyzes the ATP-dependent amidation of deamido-NAD to form NAD. Uses ammonia as a nitrogen source. The polypeptide is NH(3)-dependent NAD(+) synthetase (Thermoplasma volcanium (strain ATCC 51530 / DSM 4299 / JCM 9571 / NBRC 15438 / GSS1)).